Here is a 481-residue protein sequence, read N- to C-terminus: MRHLWLLLLLCVFSVQTQAADDDYDEPTDSLDARGHRPVDRRKEEPPSLRPAPPPISGGGYRARPAKATANQKKVERRPPDAGGCLHADTDMGVLCPTGCTLQQTLLNQERPIKSSIAELNNNIQSVSDTSSVTFQYLTLLKDMWKKKQAQVKENENVINEYSSILEDQRLYIDETVNDNIPLNLRVLRSILEDLRSKIQKLESDISAQMEYCRTPCTVSCNIPVVSGKECEEIIRKGGETSEMYLIQPDTSIKPYRVYCDMKTENGGWTVIQNRQDGSVDFGRKWDPYKKGFGNIATNEDAKKYCGLPGEYWLGNDKISQLTRMGPTELLIEMEDWKGDKVKAHYGGFTVQNEASKYQVSVNKYKGTAGNALMDGASQLVGENRTMTIHNGMFFSTYDRDNDGWVTTDPRKQCSKEDGGGWWYNRCHAANPNGRYYWGGLYSWDMSKHGTDDGVVWMNWKGSWYSMRRMSMKIRPFFPQQ.

An N-terminal signal peptide occupies residues 1–19 (MRHLWLLLLLCVFSVQTQA). The segment at 22 to 81 (DDYDEPTDSLDARGHRPVDRRKEEPPSLRPAPPPISGGGYRARPAKATANQKKVERRPPD) is disordered. A compositionally biased stretch (basic and acidic residues) spans 31-47 (LDARGHRPVDRRKEEPP). Residues 35 to 37 (GHR) are beta-chain polymerization, binding distal domain of another fibrin. Residues 149 to 213 (QAQVKENENV…SDISAQMEYC (65 aa)) are a coiled coil. Intrachain disulfides connect C221-C306 and C231-C260. The 257-residue stretch at 222–478 (NIPVVSGKEC…RMSMKIRPFF (257 aa)) folds into the Fibrinogen C-terminal domain. The N-linked (GlcNAc...) asparagine glycan is linked to N384. An intrachain disulfide couples C414 to C427.

In terms of assembly, heterohexamer; disulfide linked. Contains 2 sets of 3 non-identical chains (alpha, beta and gamma). The 2 heterotrimers are in head to head conformation with the N-termini in a small central domain. Post-translationally, conversion of fibrinogen to fibrin is triggered by thrombin, which cleaves fibrinopeptides A and B from alpha and beta chains, and thus exposes the N-terminal polymerization sites responsible for the formation of the soft clot.

It is found in the secreted. Its function is as follows. Cleaved by the protease thrombin to yield monomers which, together with fibrinogen alpha (FGA) and fibrinogen gamma (FGG), polymerize to form an insoluble fibrin matrix. Fibrin has a major function in hemostasis as one of the primary components of blood clots. In addition, functions during the early stages of wound repair to stabilize the lesion and guide cell migration during re-epithelialization. Was originally thought to be essential for platelet aggregation, based on in vitro studies using anticoagulated blood. However, subsequent studies have shown that it is not absolutely required for thrombus formation in vivo. Enhances expression of SELP in activated platelets via an ITGB3-dependent pathway. Maternal fibrinogen is essential for successful pregnancy. Fibrin deposition is also associated with infection, where it protects against IFNG-mediated hemorrhage. May also facilitate the immune response via both innate and T-cell mediated pathways. The protein is Fibrinogen beta chain (Fgb) of Mus musculus (Mouse).